A 164-amino-acid chain; its full sequence is 3-hydroxyacyl-[acyl-carrier-protein] dehydratase FabZ (164 aa).

H70 is an active-site residue.

Belongs to the thioester dehydratase family. FabZ subfamily.

It is found in the cytoplasm. The catalysed reaction is a (3R)-hydroxyacyl-[ACP] = a (2E)-enoyl-[ACP] + H2O. In terms of biological role, involved in unsaturated fatty acids biosynthesis. Catalyzes the dehydration of short chain beta-hydroxyacyl-ACPs and long chain saturated and unsaturated beta-hydroxyacyl-ACPs. This Synechocystis sp. (strain ATCC 27184 / PCC 6803 / Kazusa) protein is 3-hydroxyacyl-[acyl-carrier-protein] dehydratase FabZ.